The sequence spans 202 residues: Helix-loop-helix protein 10 (202 aa).

Disordered regions lie at residues 1-26 (MESS…NSEL) and 83-112 (QNKS…GKID). A compositionally biased stretch (polar residues) spans 17-26 (STGNHGNSEL). The tract at residues 121 to 134 (TRRYEANARERNRV) is basic motif. One can recognise a bHLH domain in the interval 121 to 172 (TRRYEANARERNRVQQLSKMFDQLRVCLPIEDDAKISKLATLKVASSYIGYL). A helix-loop-helix motif region spans residues 135–172 (QQLSKMFDQLRVCLPIEDDAKISKLATLKVASSYIGYL).

Heterodimer with hlh-2. Expressed in intestine, neurons in head, body and tail, and in body hypodermis, and vulva. Expressed in neurons in the male-specific genital sensilla (simple sense organs) known as rays.

It is found in the nucleus. It localises to the cytoplasm. In terms of biological role, probable transcription factor which binds the E box motif 5'-CA[TC][AG]TG-3'. The sequence is that of Helix-loop-helix protein 10 from Caenorhabditis elegans.